The primary structure comprises 672 residues: Hydrogenase-4 component B (672 aa).

The Periplasmic portion of the chain corresponds to 1-5; the sequence is MDALQ. Residues 6 to 26 form a helical membrane-spanning segment; the sequence is LLTWSLILYLFASLASLFLLG. Over 27–30 the chain is Cytoplasmic; that stretch reads LDRL. The helical transmembrane segment at 31–51 threads the bilayer; that stretch reads AIKLSGITSLVGGVIGIISGI. At 52-79 the chain is on the periplasmic side; sequence TQLHAGVTLVARFAPPFEFADLTLRMDS. A helical transmembrane segment spans residues 80–100; it reads LSAFMVLVISLLVVVCSLYSL. At 101–119 the chain is on the cytoplasmic side; that stretch reads TYMREYEGKGAAAMGFFMN. Residues 120-140 traverse the membrane as a helical segment; that stretch reads IFIASMVALLVMDNAFWFIVL. Residues 141-164 lie on the Periplasmic side of the membrane; it reads FEMMSLSSWFLVIARQDKTSINAG. Residues 165–185 form a helical membrane-spanning segment; that stretch reads MLYFFIAHAGSVLIMIAFLLM. At 186 to 199 the chain is on the cytoplasmic side; sequence GRESGSLDFASFRT. The chain crosses the membrane as a helical span at residues 200-220; sequence LSLSPGLASAVFLLAFFGFGA. Residues 221–242 lie on the Periplasmic side of the membrane; it reads KAGMMPLHSWLPRAHPAAPSHA. The helical transmembrane segment at 243–263 threads the bilayer; it reads SALMSGVMVKIGIFGILKVAM. Residues 264-272 lie on the Cytoplasmic side of the membrane; it reads DLLAQTGLP. A helical membrane pass occupies residues 273 to 293; the sequence is LWWGILVMAIGAISALLGVLY. Residues 294–311 are Periplasmic-facing; sequence ALAEQDIKRLLAWSTVEN. Residues 312–332 form a helical membrane-spanning segment; that stretch reads VGIILLAVGVAMVGLSLHDPL. The Cytoplasmic segment spans residues 333–342; that stretch reads LTVVGLLGAL. The chain crosses the membrane as a helical span at residues 343-363; that stretch reads FHLLNHALFKGLLFLGAGAII. Residues 364–384 are Periplasmic-facing; sequence SRLHTHDMEKMGALAKRMPWT. The chain crosses the membrane as a helical span at residues 385–405; that stretch reads AAACLIGCLAISAIPPLNGFI. Over 406–427 the chain is Cytoplasmic; that stretch reads SEWYTWQSLFSLSRVEAVALQL. The chain crosses the membrane as a helical span at residues 428 to 448; it reads AGPIAMVMLAVTGGLAVMCFV. Over 449-474 the chain is Periplasmic; the sequence is KMYGITFCGAPRSTHAEEAQEVPNTM. A helical transmembrane segment spans residues 475–495; sequence IVAMLLLAALCVLIALSASWL. The Cytoplasmic portion of the chain corresponds to 496–504; that stretch reads APKIMHIAH. A helical membrane pass occupies residues 505 to 525; sequence AFTNTPPATVASGIALVPGTF. Over 526 to 531 the chain is Periplasmic; the sequence is HTQVTP. A helical transmembrane segment spans residues 532 to 552; it reads SLLLLLLLAMPLLPGLYWLWC. Residues 553–651 are Cytoplasmic-facing; it reads RSRRAAFRRT…KEIQHLQSGD (99 aa). A helical transmembrane segment spans residues 652–672; sequence FRLYCLYVVAALVVLLIAIAV.

This sequence belongs to the complex I subunit 5 family.

It localises to the cell inner membrane. Its function is as follows. Possible component of hydrogenase 4. The polypeptide is Hydrogenase-4 component B (Escherichia coli (strain K12)).